Here is a 562-residue protein sequence, read N- to C-terminus: MOB kinase activator-like 2 (562 aa).

Positions 30-50 are disordered; it reads KSGSVQGTTATATATGPPSPP. Low complexity predominate over residues 31-45; the sequence is SGSVQGTTATATATG. Positions 170, 175, 250, and 255 each coordinate Zn(2+). 3 disordered regions span residues 304 to 378, 468 to 523, and 538 to 562; these read DDTS…TASA, NFSN…STTV, and GASA…SSTA. 3 stretches are compositionally biased toward low complexity: residues 305–349, 357–378, and 471–481; these read DTSG…NSTS, NSQS…TASA, and NNNNNNHNLNH. Residues 482–514 show a composition bias toward basic residues; sequence LNHHHHHHHHQHHHQHHPHGHHGHQGHQGHQGH. Low complexity predominate over residues 547–562; that stretch reads AVSAATGGATSASSTA.

Belongs to the MOB1/phocein family. As to quaternary structure, interacts with and activates trc, also interacts with wts.

It is found in the cytoplasm. It localises to the nucleus. Required for the normal morphogenesis of a variety of polarized outgrowths including epidermal hairs, bristles, arista laterals, and dendrites. The chain is MOB kinase activator-like 2 from Drosophila pseudoobscura pseudoobscura (Fruit fly).